The sequence spans 190 residues: Remorin (190 aa).

Positions 1-12 (MAEEQKTSKVDV) are enriched in basic and acidic residues. Disordered stretches follow at residues 1 to 45 (MAEE…VESK) and 50 to 69 (VEKP…SADR). At S14 the chain carries Phosphoserine. T58 carries the post-translational modification Phosphothreonine. The stretch at 92 to 147 (EKSKAENRAQKKISDVHAWENSKKAAVEAQLRKIEEKLEKKKAQYGEKMKNKVAAI) forms a coiled coil.

The protein belongs to the remorin family. In terms of assembly, may polymerize to form filamentous structures. In terms of tissue distribution, expressed in roots, leaves, stems, flowers and siliques, with a maximal expression in apical regions.

In terms of biological role, exhibits a non sequence-specific DNA-binding activity. The sequence is that of Remorin (DBP) from Arabidopsis thaliana (Mouse-ear cress).